The chain runs to 150 residues: Large ribosomal subunit protein bL9 (150 aa).

It belongs to the bacterial ribosomal protein bL9 family.

Functionally, binds to the 23S rRNA. This chain is Large ribosomal subunit protein bL9, found in Shewanella denitrificans (strain OS217 / ATCC BAA-1090 / DSM 15013).